A 160-amino-acid polypeptide reads, in one-letter code: MGVFTYETEFTSVIPPPRLYKAFVLDTDNLIPKIAPQAVKSTELVQGDGGVGTIKKIHLGEGSEYSYVKHQIDGLDKDNFVYNYSIIEGDAIGDKVEKISYEIKLVASPSGGSIIKSTSHYHCKGEVEIKEEHVKAGKERAAGLFKIIENYLLGNPDAYN.

Belongs to the BetVI family. In terms of processing, phosphorylated in vivo. Phosphorylation prevents its activity as ribonuclease. In terms of tissue distribution, highly expressed in roots. Expressed a low levels in ripe red fruits.

Possesses ribonuclease activity in vitro. In Fragaria ananassa (Strawberry), this protein is Major strawberry allergen Fra a 1.07.